A 902-amino-acid chain; its full sequence is 4-hydroxyphenylacetate decarboxylase glycyl radical subunit (902 aa).

The PFL domain maps to 38–774 (KRAEDLLDVY…ATLATPDGRL (737 aa)). Residues S348 and C507 each contribute to the 4-hydroxyphenylacetate site. C507 functions as the Cysteine radical intermediate in the catalytic mechanism. E509 acts as the Proton donor in catalysis. 4-hydroxyphenylacetate contacts are provided by H540 and E641. The 121-residue stretch at 782–902 (GSVSAYAGTD…VIARTEYEGV (121 aa)) folds into the Glycine radical domain. Glycine radical is present on G877.

This sequence belongs to the glycyl radical enzyme (GRE) family. HPAD subfamily. In terms of assembly, heterooctamer consisting of 4 large (HpdB) subunits and 4 small (HpdC) subunits. Also forms a catalytically inactive homodimer. Post-translationally, phosphorylated on serine. Phosphorylation may trigger the formation of the active heterooctamers and thereby regulates enzyme activity. In terms of processing, requires the activating protein HpdA to generate the key active site glycyl radical that is involved in catalysis.

The catalysed reaction is 4-hydroxyphenylacetate + H(+) = 4-methylphenol + CO2. The enzyme catalyses 3,4-dihydroxyphenylacetate + H(+) = 4-methylcatechol + CO2. It carries out the reaction 2-hydroxy-2-(4-hydroxyphenyl)acetate + H(+) = 4-hydroxybenzyl alcohol + CO2. Enzyme activity catalyzed by the HPA decarboxylase complex is rapidly and irreversibly inactivated by oxygen. Competitively inhibited by p-hydroxyphenylacetamide. Not inhibited by m- or o-hydroxyphenyl-acetate, p-hydroxybenzoate or p-hydroxyphenylpropionate. Its function is as follows. Glycyl radical subunit of the HPA decarboxylase that decarboxylates phenylacetates with a hydroxyl group in the p-position. Active toward 4-hydroxyphenylacetate, 3,4-dihydroxyphenylacetate and to a lesser extent p-hydroxymandelate (2-hydroxy-2-(4-hydroxyphenyl)acetate), forming 4-methylphenol, 4-methylcatechol and 4-hydroxybenzylalcohol, respectively. Is likely involved in the catabolism of aromatic amino acids such as tyrosine fermentation. 4-methylphenol (p-cresol) formation provides metabolic toxicity, which may benefit the pathogen C.difficile by suppression of the endogenous gastrointestinal microflora, allowing the development of gastrointestinal infections. The large subunit is the catalytic subunit that binds the substrate. The chain is 4-hydroxyphenylacetate decarboxylase glycyl radical subunit from Clostridioides difficile (Peptoclostridium difficile).